The chain runs to 562 residues: Arginine--tRNA ligase (562 aa).

The 'HIGH' region motif lies at 129 to 139; sequence ANPTGPLHVGH.

The protein belongs to the class-I aminoacyl-tRNA synthetase family. In terms of assembly, monomer.

It localises to the cytoplasm. The catalysed reaction is tRNA(Arg) + L-arginine + ATP = L-arginyl-tRNA(Arg) + AMP + diphosphate. In Xylella fastidiosa (strain M12), this protein is Arginine--tRNA ligase.